Reading from the N-terminus, the 369-residue chain is Anhydro-N-acetylmuramic acid kinase (369 aa).

12-19 (GTSMDGID) serves as a coordination point for ATP.

The protein belongs to the anhydro-N-acetylmuramic acid kinase family.

The catalysed reaction is 1,6-anhydro-N-acetyl-beta-muramate + ATP + H2O = N-acetyl-D-muramate 6-phosphate + ADP + H(+). Its pathway is amino-sugar metabolism; 1,6-anhydro-N-acetylmuramate degradation. The protein operates within cell wall biogenesis; peptidoglycan recycling. Functionally, catalyzes the specific phosphorylation of 1,6-anhydro-N-acetylmuramic acid (anhMurNAc) with the simultaneous cleavage of the 1,6-anhydro ring, generating MurNAc-6-P. Is required for the utilization of anhMurNAc either imported from the medium or derived from its own cell wall murein, and thus plays a role in cell wall recycling. In Shewanella sediminis (strain HAW-EB3), this protein is Anhydro-N-acetylmuramic acid kinase.